Consider the following 240-residue polypeptide: UDP-2,3-diacylglucosamine hydrolase (240 aa).

5 residues coordinate Mn(2+): Asp-8, His-10, Asp-41, Asn-79, and His-114. 79–80 (NR) provides a ligand contact to substrate. 5 residues coordinate substrate: Asp-122, Ser-160, Asn-164, Lys-167, and His-195. Positions 195 and 197 each coordinate Mn(2+).

The protein belongs to the LpxH family. Requires Mn(2+) as cofactor.

The protein resides in the cell inner membrane. It catalyses the reaction UDP-2-N,3-O-bis[(3R)-3-hydroxytetradecanoyl]-alpha-D-glucosamine + H2O = 2-N,3-O-bis[(3R)-3-hydroxytetradecanoyl]-alpha-D-glucosaminyl 1-phosphate + UMP + 2 H(+). Its pathway is glycolipid biosynthesis; lipid IV(A) biosynthesis; lipid IV(A) from (3R)-3-hydroxytetradecanoyl-[acyl-carrier-protein] and UDP-N-acetyl-alpha-D-glucosamine: step 4/6. In terms of biological role, hydrolyzes the pyrophosphate bond of UDP-2,3-diacylglucosamine to yield 2,3-diacylglucosamine 1-phosphate (lipid X) and UMP by catalyzing the attack of water at the alpha-P atom. Involved in the biosynthesis of lipid A, a phosphorylated glycolipid that anchors the lipopolysaccharide to the outer membrane of the cell. This is UDP-2,3-diacylglucosamine hydrolase from Salmonella paratyphi C (strain RKS4594).